Here is a 40-residue protein sequence, read N- to C-terminus: VVLGPASDGRNAAANNKASDLIRQICCGYGDCGFVPNVCV.

The propeptide occupies 1–23 (VVLGPASDGRNAAANNKASDLIR). A Pyrrolidone carboxylic acid modification is found at Gln-24. 2 disulfide bridges follow: Cys-26–Cys-32 and Cys-27–Cys-39.

The protein belongs to the conotoxin A superfamily. As to expression, expressed by the venom duct.

Its subcellular location is the secreted. Alpha-conotoxins act on postsynaptic membranes, they bind to the nicotinic acetylcholine receptors (nAChR) and thus inhibit them. The chain is Alpha-conotoxin-like Lp1.6b from Conus leopardus (Leopard cone).